A 529-amino-acid polypeptide reads, in one-letter code: Inosine-5'-monophosphate dehydrogenase (529 aa).

2 consecutive CBS domains span residues Met129–Val185 and Met189–Thr246. Residues Asp283 and Gly334–Gly336 each bind NAD(+). The K(+) site is built by Gly336 and Gly338. An IMP-binding site is contributed by Ser339. Position 341 (Cys341) interacts with K(+). The Thioimidate intermediate role is filled by Cys341. Residues Asp374–Gly376, Gly397–Ser398, and Tyr421–Gly425 contribute to the IMP site. Arg443 acts as the Proton acceptor in catalysis. An IMP-binding site is contributed by Glu458. K(+) is bound by residues Glu511, Ser512, and His513.

The protein belongs to the IMPDH/GMPR family. Homotetramer. The cofactor is K(+).

It catalyses the reaction IMP + NAD(+) + H2O = XMP + NADH + H(+). It participates in purine metabolism; XMP biosynthesis via de novo pathway; XMP from IMP: step 1/1. With respect to regulation, mycophenolic acid (MPA) is a non-competitive inhibitor that prevents formation of the closed enzyme conformation by binding to the same site as the amobile flap. In contrast, mizoribine monophosphate (MZP) is a competitive inhibitor that induces the closed conformation. MPA is a potent inhibitor of mammalian IMPDHs but a poor inhibitor of the bacterial enzymes. MZP is a more potent inhibitor of bacterial IMPDH. In terms of biological role, catalyzes the conversion of inosine 5'-phosphate (IMP) to xanthosine 5'-phosphate (XMP), the first committed and rate-limiting step in the de novo synthesis of guanine nucleotides, and therefore plays an important role in the regulation of cell growth. The polypeptide is Inosine-5'-monophosphate dehydrogenase (Mycobacterium leprae (strain TN)).